The chain runs to 310 residues: MAGNSQRRGAIRKSGTKKGTSVGSGGQRRRGLEGRGPTPSAHMRPNHPAAKRAKAQQRRPARGRTDETETVLGRNPVLECLRAGVPSTALYVALGVEADERLTESVSRAADSGIPILEVPRTDLDRMTANHLHQGIALQVPPYNYAHPDDLLAAALDTPPALLVALDNISDPRNLGAIVRSVAAFGGHGVLIPQRRSASVTAVAWRTSAGAAARMPVARATNLTRALKDWADRGVRVVGLDAGGDTAIDDLDGSDPIVVVVGSEGKGLSRLVRQTCDEVVSVPMAGPTESLNASVAAGVVLAEIARQRRT.

The tract at residues 1–70 (MAGNSQRRGA…ARGRTDETET (70 aa)) is disordered. A compositionally biased stretch (basic residues) spans 49-62 (AAKRAKAQQRRPAR). 3 residues coordinate S-adenosyl-L-methionine: glycine 262, valine 282, and leucine 291.

This sequence belongs to the class IV-like SAM-binding methyltransferase superfamily. RNA methyltransferase TrmH family.

This is an uncharacterized protein from Mycobacterium ulcerans (strain Agy99).